The following is a 310-amino-acid chain: tRNA-cytidine(32) 2-sulfurtransferase (310 aa).

A PP-loop motif motif is present at residues serine 47–serine 52. Residues cysteine 122, cysteine 125, and cysteine 213 each coordinate [4Fe-4S] cluster.

It belongs to the TtcA family. As to quaternary structure, homodimer. Requires Mg(2+) as cofactor. The cofactor is [4Fe-4S] cluster.

The protein resides in the cytoplasm. The enzyme catalyses cytidine(32) in tRNA + S-sulfanyl-L-cysteinyl-[cysteine desulfurase] + AH2 + ATP = 2-thiocytidine(32) in tRNA + L-cysteinyl-[cysteine desulfurase] + A + AMP + diphosphate + H(+). Its pathway is tRNA modification. Catalyzes the ATP-dependent 2-thiolation of cytidine in position 32 of tRNA, to form 2-thiocytidine (s(2)C32). The sulfur atoms are provided by the cysteine/cysteine desulfurase (IscS) system. In Haemophilus influenzae (strain 86-028NP), this protein is tRNA-cytidine(32) 2-sulfurtransferase.